The chain runs to 92 residues: Acylphosphatase (92 aa).

The Acylphosphatase-like domain maps to 5-92 (CIAAYVYGVV…TPFETFKIRY (88 aa)). Catalysis depends on residues Arg-20 and Asn-38.

This sequence belongs to the acylphosphatase family.

The catalysed reaction is an acyl phosphate + H2O = a carboxylate + phosphate + H(+). In Yersinia enterocolitica serotype O:8 / biotype 1B (strain NCTC 13174 / 8081), this protein is Acylphosphatase (acyP).